Consider the following 136-residue polypeptide: MQTTGALLISPALIRSCTRGLIRPVSASFLSRPEIQSVQPSYSSGPLQVARREFQTSVVSRDIDTAAKFIGAGAATVGVAGSGAGIGTVFGSLIIGYARNPSLKQQLFSYAILGFALSEAMGLFCLMVAFLILFAM.

A mitochondrion-targeting transit peptide spans 1-61 (MQTTGALLIS…REFQTSVVSR (61 aa)). A helical membrane pass occupies residues 77-97 (VGVAGSGAGIGTVFGSLIIGY). Residue lysine 104 is modified to N6,N6,N6-trimethyllysine. Residues 112-132 (ILGFALSEAMGLFCLMVAFLI) form a helical membrane-spanning segment.

This sequence belongs to the ATPase C chain family. As to quaternary structure, homooctamer; the c-ring consists of eight c subunits forming a circle, and each subunit adopts a hairpin shape. Component of the ATP synthase complex composed at least of ATP5F1A/subunit alpha, ATP5F1B/subunit beta, ATP5MC1/subunit c (homooctomer), MT-ATP6/subunit a, MT-ATP8/subunit 8, ATP5ME/subunit e, ATP5MF/subunit f, ATP5MG/subunit g, ATP5MK/subunit k, ATP5MJ/subunit j, ATP5F1C/subunit gamma, ATP5F1D/subunit delta, ATP5F1E/subunit epsilon, ATP5PF/subunit F6, ATP5PB/subunit b, ATP5PD/subunit d, ATP5PO/subunit OSCP. ATP synthase complex consists of a soluble F(1) head domain (subunits alpha(3) and beta(3)) - the catalytic core - and a membrane F(0) domain - the membrane proton channel (subunits c, a, 8, e, f, g, k and j). These two domains are linked by a central stalk (subunits gamma, delta, and epsilon) rotating inside the F1 region and a stationary peripheral stalk (subunits F6, b, d, and OSCP). Interacts with TMEM70 (homooligomer form); this interaction facilitates the oligomer formation of subunit c/ATP5MC1 (c-ring) and the c-ring membrane insertion and also protects ATP5MC1 against intramitochondrial proteolysis. Trimethylated by ATPSCKMT at Lys-104. Methylation is required for proper incorporation of the C subunit into the ATP synthase complex and mitochondrial respiration.

The protein localises to the mitochondrion membrane. The enzyme catalyses H(+)(in) = H(+)(out). Its function is as follows. Subunit c, of the mitochondrial membrane ATP synthase complex (F(1)F(0) ATP synthase or Complex V) that produces ATP from ADP in the presence of a proton gradient across the membrane which is generated by electron transport complexes of the respiratory chain. ATP synthase complex consist of a soluble F(1) head domain - the catalytic core - and a membrane F(1) domain - the membrane proton channel. These two domains are linked by a central stalk rotating inside the F(1) region and a stationary peripheral stalk. During catalysis, ATP synthesis in the catalytic domain of F(1) is coupled via a rotary mechanism of the central stalk subunits to proton translocation. With the subunit a (MT-ATP6), forms the proton-conducting channel in the F(0) domain, that contains two crucial half-channels (inlet and outlet) that facilitate proton movement from the mitochondrial intermembrane space (IMS) into the matrix. Protons are taken up via the inlet half-channel and released through the outlet half-channel, following a Grotthuss mechanism. The polypeptide is ATP synthase F(0) complex subunit C1, mitochondrial (Bos taurus (Bovine)).